A 462-amino-acid chain; its full sequence is Receptor like protein 29 (462 aa).

The signal sequence occupies residues 1 to 26 (MTMKRALPSPSSLLFFFLLITPLFLC). The Extracellular portion of the chain corresponds to 27–441 (QENRVSASMP…SQASRYYRSC (415 aa)). An N-linked (GlcNAc...) asparagine glycan is attached at Asn-139. 10 LRR repeats span residues 139 to 164 (NSSL…ISSL), 165 to 188 (KSLQ…IFSL), 190 to 212 (SLVH…LGNL), 213 to 236 (NNLV…ISQL), 238 to 260 (MLQK…VEKL), 261 to 284 (RSLS…ISNL), 286 to 308 (SLQY…LGFL), 309 to 331 (PKLQ…SYTK), 332 to 355 (LTNL…GFES), and 357 to 381 (PHVF…SFLR). Residues Asn-334, Asn-363, and Asn-416 are each glycosylated (N-linked (GlcNAc...) asparagine). Residues 442–462 (FFANALFPFALFLGLHQRWVL) traverse the membrane as a helical segment.

The protein belongs to the RLP family.

It localises to the cell membrane. This chain is Receptor like protein 29, found in Arabidopsis thaliana (Mouse-ear cress).